A 232-amino-acid chain; its full sequence is Nucleolar protein 16 (232 aa).

The span at 1 to 14 (MGRELQKRKKRSSR) shows a compositional bias: basic residues. Disordered stretches follow at residues 1 to 20 (MGRELQKRKKRSSRAKVQTH) and 113 to 161 (RSDN…QSSR). Residues 132–154 (EEPKPKNPTHDIEWHGISDDRQE) are compositionally biased toward basic and acidic residues.

It belongs to the NOP16 family. As to quaternary structure, component of the pre-66S ribosomal particle.

It is found in the nucleus. It localises to the nucleolus. Its function is as follows. Involved in the biogenesis of the 60S ribosomal subunit. This is Nucleolar protein 16 (nop-16) from Neurospora crassa (strain ATCC 24698 / 74-OR23-1A / CBS 708.71 / DSM 1257 / FGSC 987).